The chain runs to 246 residues: uncharacterized protein (246 aa).

2 stretches are compositionally biased toward basic residues: residues Met-1 to Gly-10 and Thr-79 to Arg-97. The interval Met-1–Leu-184 is disordered. Over residues Pro-158 to Val-180 the composition is skewed to pro residues.

This is an uncharacterized protein from Homo sapiens (Human).